Consider the following 208-residue polypeptide: N-(5'-phosphoribosyl)anthranilate isomerase (208 aa).

The protein belongs to the TrpF family.

It carries out the reaction N-(5-phospho-beta-D-ribosyl)anthranilate = 1-(2-carboxyphenylamino)-1-deoxy-D-ribulose 5-phosphate. The protein operates within amino-acid biosynthesis; L-tryptophan biosynthesis; L-tryptophan from chorismate: step 3/5. The polypeptide is N-(5'-phosphoribosyl)anthranilate isomerase (Natronomonas pharaonis (strain ATCC 35678 / DSM 2160 / CIP 103997 / JCM 8858 / NBRC 14720 / NCIMB 2260 / Gabara) (Halobacterium pharaonis)).